We begin with the raw amino-acid sequence, 187 residues long: Crossover junction endodeoxyribonuclease RuvC (187 aa).

Active-site residues include aspartate 7, glutamate 67, and aspartate 140. Mg(2+) contacts are provided by aspartate 7, glutamate 67, and aspartate 140.

This sequence belongs to the RuvC family. In terms of assembly, homodimer which binds Holliday junction (HJ) DNA. The HJ becomes 2-fold symmetrical on binding to RuvC with unstacked arms; it has a different conformation from HJ DNA in complex with RuvA. In the full resolvosome a probable DNA-RuvA(4)-RuvB(12)-RuvC(2) complex forms which resolves the HJ. Requires Mg(2+) as cofactor.

The protein resides in the cytoplasm. The enzyme catalyses Endonucleolytic cleavage at a junction such as a reciprocal single-stranded crossover between two homologous DNA duplexes (Holliday junction).. Functionally, the RuvA-RuvB-RuvC complex processes Holliday junction (HJ) DNA during genetic recombination and DNA repair. Endonuclease that resolves HJ intermediates. Cleaves cruciform DNA by making single-stranded nicks across the HJ at symmetrical positions within the homologous arms, yielding a 5'-phosphate and a 3'-hydroxyl group; requires a central core of homology in the junction. The consensus cleavage sequence is 5'-(A/T)TT(C/G)-3'. Cleavage occurs on the 3'-side of the TT dinucleotide at the point of strand exchange. HJ branch migration catalyzed by RuvA-RuvB allows RuvC to scan DNA until it finds its consensus sequence, where it cleaves and resolves the cruciform DNA. This Chlorobium phaeobacteroides (strain DSM 266 / SMG 266 / 2430) protein is Crossover junction endodeoxyribonuclease RuvC.